The chain runs to 252 residues: Geranylgeranylglyceryl phosphate synthase (252 aa).

The Mg(2+) site is built by D27 and T57. Residues 175 to 181 (YLEAGSG), 206 to 207 (GG), and 228 to 229 (GN) contribute to the sn-glycerol 1-phosphate site.

The protein belongs to the GGGP/HepGP synthase family. Group II subfamily. The cofactor is Mg(2+).

It localises to the cytoplasm. It catalyses the reaction sn-glycerol 1-phosphate + (2E,6E,10E)-geranylgeranyl diphosphate = sn-3-O-(geranylgeranyl)glycerol 1-phosphate + diphosphate. Its pathway is membrane lipid metabolism; glycerophospholipid metabolism. Prenyltransferase that catalyzes the transfer of the geranylgeranyl moiety of geranylgeranyl diphosphate (GGPP) to the C3 hydroxyl of sn-glycerol-1-phosphate (G1P). This reaction is the first ether-bond-formation step in the biosynthesis of archaeal membrane lipids. This chain is Geranylgeranylglyceryl phosphate synthase, found in Metallosphaera sedula (strain ATCC 51363 / DSM 5348 / JCM 9185 / NBRC 15509 / TH2).